Here is a 263-residue protein sequence, read N- to C-terminus: Hydroxyethylthiazole kinase (263 aa).

Residue Met-41 coordinates substrate. ATP-binding residues include Lys-117 and Ser-163. Substrate is bound at residue Gly-190.

It belongs to the Thz kinase family. Mg(2+) is required as a cofactor.

The catalysed reaction is 5-(2-hydroxyethyl)-4-methylthiazole + ATP = 4-methyl-5-(2-phosphooxyethyl)-thiazole + ADP + H(+). The protein operates within cofactor biosynthesis; thiamine diphosphate biosynthesis; 4-methyl-5-(2-phosphoethyl)-thiazole from 5-(2-hydroxyethyl)-4-methylthiazole: step 1/1. Its function is as follows. Catalyzes the phosphorylation of the hydroxyl group of 4-methyl-5-beta-hydroxyethylthiazole (THZ). The polypeptide is Hydroxyethylthiazole kinase (Thermoanaerobacter sp. (strain X514)).